The sequence spans 67 residues: Large ribosomal subunit protein uL29 (67 aa).

The protein belongs to the universal ribosomal protein uL29 family.

This chain is Large ribosomal subunit protein uL29, found in Halorhodospira halophila (strain DSM 244 / SL1) (Ectothiorhodospira halophila (strain DSM 244 / SL1)).